Here is a 119-residue protein sequence, read N- to C-terminus: Ribonuclease P protein component (119 aa).

The protein belongs to the RnpA family. As to quaternary structure, consists of a catalytic RNA component (M1 or rnpB) and a protein subunit.

It catalyses the reaction Endonucleolytic cleavage of RNA, removing 5'-extranucleotides from tRNA precursor.. Its function is as follows. RNaseP catalyzes the removal of the 5'-leader sequence from pre-tRNA to produce the mature 5'-terminus. It can also cleave other RNA substrates such as 4.5S RNA. The protein component plays an auxiliary but essential role in vivo by binding to the 5'-leader sequence and broadening the substrate specificity of the ribozyme. The sequence is that of Ribonuclease P protein component from Citrobacter koseri (strain ATCC BAA-895 / CDC 4225-83 / SGSC4696).